Reading from the N-terminus, the 300-residue chain is uncharacterized protein (300 aa).

Residues 1-11 (MYNEGVTSPSQ) are compositionally biased toward polar residues. The segment at 1 to 20 (MYNEGVTSPSQLARKKNATD) is disordered. Residues 1-92 (MYNEGVTSPS…QEILITRKRR (92 aa)) constitute a DNA-binding region (recombinase). Positions 162–249 (SKENYFKELS…DLEFQKIEKE (88 aa)) form a coiled coil.

This is an uncharacterized protein from Bacillus subtilis (strain 168).